A 115-amino-acid polypeptide reads, in one-letter code: MWDPLLNEFPDSVHGLRCMLAIKYLQLVEETYEPNTLGHDLIRDLISVIRARDYAEANRRYTNVKPALEVSSKTELRQPVYQPCCCPHCPRHQASIMDLQAHVSKAADVQNVQKP.

It belongs to the geminiviridae protein AV2/V2 family. In terms of assembly, interacts with host SGS3.

It is found in the host cytoplasm. It localises to the host perinuclear region. Through its interaction with host SGS3, acts as a suppressor of RNA-mediated gene silencing, also known as post-transcriptional gene silencing (PTGS), a mechanism of plant viral defense that limits the accumulation of viral RNAs. The protein is Protein V2 of Tomato yellow leaf curl Sardinia virus (isolate Spain-2) (TYLCSV).